A 628-amino-acid chain; its full sequence is Modular serine protease (628 aa).

A signal peptide spans 1 to 25 (MQLISFLSNPLFFCALLLKFRTIFA). 4 consecutive LDL-receptor class A domains span residues 26 to 64 (ACDS…LTCV), 69 to 107 (HCTK…LRCG), 122 to 163 (NCKE…ELCG), and 166 to 204 (ECPA…LLCN). Intrachain disulfides connect cysteine 27–cysteine 39, cysteine 34–cysteine 52, cysteine 46–cysteine 63, cysteine 70–cysteine 82, cysteine 77–cysteine 95, cysteine 89–cysteine 106, cysteine 123–cysteine 135, cysteine 130–cysteine 149, cysteine 143–cysteine 162, cysteine 167–cysteine 179, cysteine 174–cysteine 192, and cysteine 186–cysteine 203. N-linked (GlcNAc...) asparagine glycosylation is present at asparagine 36. An N-linked (GlcNAc...) asparagine glycan is attached at asparagine 204. 2 Sushi domains span residues 222–285 (LGCP…KCVK) and 300–356 (ALCT…RCEQ). Intrachain disulfides connect cysteine 224–cysteine 270, cysteine 256–cysteine 283, cysteine 302–cysteine 341, and cysteine 326–cysteine 354. In terms of domain architecture, Peptidase S1 spans 369–621 (SSGGYTINNT…FEDMILNAMN (253 aa)). An N-linked (GlcNAc...) asparagine glycan is attached at asparagine 376. Cysteine 399 and cysteine 415 form a disulfide bridge. Catalysis depends on charge relay system residues histidine 414, aspartate 472, and serine 563. A glycan (N-linked (GlcNAc...) asparagine) is linked at asparagine 621.

The protein belongs to the peptidase S1 family. Post-translationally, may be proteolytically cleaved via an autocatalytic mechanism.

The protein localises to the secreted. Its function is as follows. Serine protease that plays a key role in innate immunity by activating the Toll pathway in response to infection with Gram-positive bacteria and fungi. During Gram-positive infection, acts downstream of PGRP-SA and upstream of Grass and Spz, and therefore appears to function in a pathway that links detection of Gram-positive lysine-type peptidoglycans to Toll activation. Functions in a separate pathway to the psh-mediated activation of the Toll pathway. The sequence is that of Modular serine protease from Drosophila melanogaster (Fruit fly).